A 409-amino-acid polypeptide reads, in one-letter code: Arginine biosynthesis bifunctional protein ArgJ (409 aa).

6 residues coordinate substrate: T157, K183, T194, E281, N404, and S409. The active-site Nucleophile is T194.

Belongs to the ArgJ family. Heterotetramer of two alpha and two beta chains.

The protein localises to the cytoplasm. The catalysed reaction is N(2)-acetyl-L-ornithine + L-glutamate = N-acetyl-L-glutamate + L-ornithine. It catalyses the reaction L-glutamate + acetyl-CoA = N-acetyl-L-glutamate + CoA + H(+). Its pathway is amino-acid biosynthesis; L-arginine biosynthesis; L-ornithine and N-acetyl-L-glutamate from L-glutamate and N(2)-acetyl-L-ornithine (cyclic): step 1/1. It participates in amino-acid biosynthesis; L-arginine biosynthesis; N(2)-acetyl-L-ornithine from L-glutamate: step 1/4. Catalyzes two activities which are involved in the cyclic version of arginine biosynthesis: the synthesis of N-acetylglutamate from glutamate and acetyl-CoA as the acetyl donor, and of ornithine by transacetylation between N(2)-acetylornithine and glutamate. The chain is Arginine biosynthesis bifunctional protein ArgJ from Zymomonas mobilis subsp. mobilis (strain ATCC 31821 / ZM4 / CP4).